A 196-amino-acid polypeptide reads, in one-letter code: Adenylate kinase (196 aa).

G9–T17 provides a ligand contact to ATP.

This sequence belongs to the archaeal adenylate kinase family.

It is found in the cytoplasm. The enzyme catalyses AMP + ATP = 2 ADP. This Thermococcus sibiricus (strain DSM 12597 / MM 739) protein is Adenylate kinase.